A 242-amino-acid chain; its full sequence is Large ribosomal subunit protein uL3 (242 aa).

Position 151 is an N5-methylglutamine (Gln-151).

It belongs to the universal ribosomal protein uL3 family. Part of the 50S ribosomal subunit. Forms a cluster with proteins L14 and L19. Post-translationally, methylated by PrmB.

Functionally, one of the primary rRNA binding proteins, it binds directly near the 3'-end of the 23S rRNA, where it nucleates assembly of the 50S subunit. This chain is Large ribosomal subunit protein uL3, found in Zymomonas mobilis subsp. mobilis (strain ATCC 31821 / ZM4 / CP4).